We begin with the raw amino-acid sequence, 1071 residues long: Serine/threonine-protein phosphatase 6 regulatory ankyrin repeat subunit C (1071 aa).

28 ANK repeats span residues 7–36 (SDQP…EVNA), 40–69 (ERRT…NVNA), 73–102 (VWLT…DVTA), 106–135 (YWQT…SLNM), 139–168 (TGRA…NLSA), 172–201 (KDRQ…DKSC), 205–234 (RGYT…EIDE), 238–267 (FGNT…NVNQ), 271–301 (RGYT…DVNM), 305–334 (EGKS…EIDC), 338–367 (YGNT…DTAR), 371–400 (HGMF…LYSI), 422–451 (FGRT…DMNK), 455–484 (FGRT…EVNE), 488–539 (SGCT…DPCL), 543–573 (KGYS…TLGD), 578–607 (GSIS…CVDV), 611–640 (VGRS…SCLL), 645–674 (SKWG…GADL), 681–710 (EGQT…CPDM), 714–743 (RGRT…SVLS), 747–776 (QGRS…HSQP), 784–814 (HGYT…SIQE), 816–845 (NPFT…CNSL), 852–881 (KGRT…DIDA), 885–915 (SGRS…DLSL), 919–951 (NKNT…LINA), and 955–984 (MLQM…TVLA).

As to quaternary structure, protein phosphatase 6 (PP6) holoenzyme is proposed to be a heterotrimeric complex formed by the catalytic subunit, a SAPS domain-containing subunit (PP6R) and an ankyrin repeat-domain containing regulatory subunit (ARS).

Its function is as follows. Putative regulatory subunit of protein phosphatase 6 (PP6) that may be involved in the recognition of phosphoprotein substrates. The sequence is that of Serine/threonine-protein phosphatase 6 regulatory ankyrin repeat subunit C (ankrd52) from Danio rerio (Zebrafish).